The chain runs to 400 residues: Chaperone protein DnaJ (400 aa).

Residues 4 to 69 enclose the J domain; sequence DYYETLGVTR…DKRRRYDQFG (66 aa). A CR-type zinc finger spans residues 156–237; sequence GVEKTLKVKR…CYGEGIKLGE (82 aa). 8 residues coordinate Zn(2+): cysteine 169, cysteine 172, cysteine 185, cysteine 188, cysteine 211, cysteine 214, cysteine 225, and cysteine 228. 4 CXXCXGXG motif repeats span residues 169-176, 185-192, 211-218, and 225-232; these read CEVCNGTG, CQTCHGSG, CPTCGGEG, and CTACYGEG.

Belongs to the DnaJ family. Homodimer. Zn(2+) serves as cofactor.

It localises to the cytoplasm. In terms of biological role, participates actively in the response to hyperosmotic and heat shock by preventing the aggregation of stress-denatured proteins and by disaggregating proteins, also in an autonomous, DnaK-independent fashion. Unfolded proteins bind initially to DnaJ; upon interaction with the DnaJ-bound protein, DnaK hydrolyzes its bound ATP, resulting in the formation of a stable complex. GrpE releases ADP from DnaK; ATP binding to DnaK triggers the release of the substrate protein, thus completing the reaction cycle. Several rounds of ATP-dependent interactions between DnaJ, DnaK and GrpE are required for fully efficient folding. Also involved, together with DnaK and GrpE, in the DNA replication of plasmids through activation of initiation proteins. This is Chaperone protein DnaJ from Chlorobium chlorochromatii (strain CaD3).